The primary structure comprises 634 residues: MISLKFPNNEVREFPENITALEVAKTLSPRLAKEALCASINGKLIDLSQKISESGEFRLYTFEDDEGKDVFRHSSAHLMAQAVKRLFPKTKLAIGPAIKDGFYYDFDPEESFSPEDLEKIEAEMEKIVKEDLPIERFVLSRDEAIKFFEEKGEIYKVELVKDIPEGVEISFYRQGEFVDLCTGPHVPSTGYLKAFKLLNIAGAYWRGNEKNKMLQRIYGVSFPKKSMLTDYLNFLEEAKKRDHRKIGQELDLFSLQEEGPGFPFFHPKGMVIRNELENFWREKHRLAGYQEIKTPIILNRELWERSGHWAHYKENMYFTKIDDQDYAIKPMNCPGSILVYKNKLHSYREFPIRLAELGLVHRHELSGVLHGLMRVRCFTQDDAHIFMLPEQVKDEIIGVINLIDEFYRLFGFEYHVELSTRPENSMGSDELWELATNSLKEALEERGLPYKINEGDGAFYGPKIDFHLKDCLGRTWQCGTIQLDFQMPEKFDLTYIGEDGQKHRPVMIHRVVFGSIERFIGILIEHYAGAFPVWLSPVQVRVITVAERHREYGQEIYQKLFNQGVRVELDDRNETIGYKIREGQMQKIPYLLIVGDKEIEQGSVAVRKRGVGDLGQKPFAEFIEELLAEIREKR.

Residues 1-61 (MISLKFPNNE…SESGEFRLYT (61 aa)) enclose the TGS domain. A catalytic region spans residues 242-532 (DHRKIGQELD…LIEHYAGAFP (291 aa)). The Zn(2+) site is built by Cys333, His384, and His509.

Belongs to the class-II aminoacyl-tRNA synthetase family. In terms of assembly, homodimer. The cofactor is Zn(2+).

The protein resides in the cytoplasm. The catalysed reaction is tRNA(Thr) + L-threonine + ATP = L-threonyl-tRNA(Thr) + AMP + diphosphate + H(+). Functionally, catalyzes the attachment of threonine to tRNA(Thr) in a two-step reaction: L-threonine is first activated by ATP to form Thr-AMP and then transferred to the acceptor end of tRNA(Thr). Also edits incorrectly charged L-seryl-tRNA(Thr). This Carboxydothermus hydrogenoformans (strain ATCC BAA-161 / DSM 6008 / Z-2901) protein is Threonine--tRNA ligase.